The sequence spans 123 residues: Maintenance of telomere capping protein 3, mitochondrial (123 aa).

The N-terminal 37 residues, 1–37 (MMGRNGIRLALKRSFSTYQPPVVEITNITKLWPTLRP), are a transit peptide targeting the mitochondrion.

The protein resides in the mitochondrion. In terms of biological role, may be involved in telomere capping. In Saccharomyces cerevisiae (strain ATCC 204508 / S288c) (Baker's yeast), this protein is Maintenance of telomere capping protein 3, mitochondrial (MTC3).